A 1403-amino-acid chain; its full sequence is MNQEVMNLFNQQAQPVSFDQIKISISSPEKILSWSYGEIKKPETINYRTFKPERDGLFCARIFGPIKDYECLCGKYKRMKYKGVICEKCGVEVTLARVRRDRMGHIELAAPVAHIWFLKSLPSRIGLLLDMALKDLERILYFESYCVIEPGLTPLKERQLLSEEEYLRAQEEYGEDSFTAMIGAEAIRRILQELDLDKIANDLREEIAVTTSELKPKKLLKRLKIIEAFQMSGNKPEWMILTVVPVIPPDLRPLVPLDGGRFATSDLNDLYRRVINRNNRLKRLIELRAPDIIIRNEKRMLQEAVDALFDNGRRGRVITGANKRPLKSLADMLKGKQGRFRQNLLGKRVDYSGRSVIVVGPELKLHQCGLPKKMALELFKPFIYARLDAKGFSATVKQAKKLVEKEKPEVWDILDEVIREHPVMLNRAPTLHRLGIQAFEPKLIEGKAIQLHPLVCAAFNADFDGDQMAVHVPLSLEAQLEARVLMMSTNNILHPANGQPIIVPSQDIVLGLYYLSIVAEGAPGEYKPDNAKNPMQGVYGDMGELEHALAAKAVSLHSKIKWRWTGIGPDGEPLTKTYETTPGRVILSGALPKHAKVPFDVVNKLMTKKEISAMIDTVYRHCGQKESVIFCDRIMALGFNHAFKAGISFGKDDMVVPENKWSIVDTTRALVKDYEQQYNDGLITQGEKYNKVVDAWAKCSDKLAAEMMGRISSVQKDEKGADKQVNSIYMMSHSGARGSPAQMKQLAAMRGLMAKPSGEIIETPIISNFKEGLDVLEYFNSTHGARKGLADTALKTANSGYLTRRLVDVAQDAVIREVDCGTTSGIKMRAIVDAGQVVATLATRILGRATAEDLVAADGTVIVKTGETIEERHLPAINAAGIQEVKIRSVLVCATKSGVCATCYGRDLARGTPVNMGEAVGVIAAQSIGEPGTQLTMRTFHIGGAAQIADSSFIESSFEGTIKIRNRAVAKNTDGDLIATGRNVAVVIVGSDGVERAVHRLQYGAKLRVDEGDKIKRGQRIAEWDPYTRPILTEVDGIVAYEDLVDGQSMTETTDESTGIAKRVVVDWRGSARTSDLKPAMVVVDRDGKALKLPRGSDARYFLPVDAIIGFDPGATVKAGDILARVSTDSAKTRDITGGLPRVAELFEARRPKDAAIIAEKSGTIAFGRDYKNKRRLTLTPHDGSEAVEYLIPKGKHIHLQDGDVVELGDYIVDGNPAPHDILAIKGVEELAAYLVNEIQEVYRLQGVSINDKHIEVIVRQMLQKVEVTDGGDSDILSGDQIDRTELTDYNEKLLAEGKKPIQGVPVLLGITKASLQTKSFISAASFQETTRVLTEAAVNGKVDTLEGLKENVIVGSLIPAGTGSMVADIRSIARRRDAMILQQKQAESGAMPVEELPPAAAE.

Residues Cys71, Cys73, Cys86, and Cys89 each contribute to the Zn(2+) site. The Mg(2+) site is built by Asp462, Asp464, and Asp466. Positions 820, 893, 900, and 903 each coordinate Zn(2+).

Belongs to the RNA polymerase beta' chain family. In terms of assembly, the RNAP catalytic core consists of 2 alpha, 1 beta, 1 beta' and 1 omega subunit. When a sigma factor is associated with the core the holoenzyme is formed, which can initiate transcription. Requires Mg(2+) as cofactor. The cofactor is Zn(2+).

It carries out the reaction RNA(n) + a ribonucleoside 5'-triphosphate = RNA(n+1) + diphosphate. Its function is as follows. DNA-dependent RNA polymerase catalyzes the transcription of DNA into RNA using the four ribonucleoside triphosphates as substrates. The chain is DNA-directed RNA polymerase subunit beta' from Methylobacterium radiotolerans (strain ATCC 27329 / DSM 1819 / JCM 2831 / NBRC 15690 / NCIMB 10815 / 0-1).